The sequence spans 881 residues: Glutamate--tRNA ligase (881 aa).

The interval 1-480 (MSVRVRLAPS…ILRFKKSIGQ (480 aa)) is glutamyl-tRNA synthetase. The 'HIGH' region motif lies at 9–19 (PSPTGNLHIGT). The short motif at 248–252 (KLSKR) is the 'KMSKS' region element. An ATP-binding site is contributed by Lys-251. The unknown stretch occupies residues 481-881 (EIEDTKIEDT…IKREIFGKPS (401 aa)). Residues 488 to 502 (EDTKKAETTPHKSKG) show a composition bias toward basic and acidic residues. Residues 488-747 (EDTKKAETTP…PTATDAETRE (260 aa)) are disordered. The span at 522–548 (QTQTTKPPKKGQTATPVATTPTATDVT) shows a compositional bias: low complexity. The segment covering 549 to 562 (ENTSVGTQETQSQI) has biased composition (polar residues). Residues 563 to 576 (TTPVATTPTATDVT) are compositionally biased toward low complexity. The span at 577-590 (ENTSVGTQETQSQI) shows a compositional bias: polar residues. Residues 591-604 (TTPVATTPTATDVT) are compositionally biased toward low complexity. Polar residues predominate over residues 605–618 (ENTSVETQETQSQI). Low complexity predominate over residues 619 to 632 (TTPVATTPTATDVT). Over residues 633-646 (ENTSVETQETQSQI) the composition is skewed to polar residues. Residues 647–660 (TTPVATTPTATDVT) show a composition bias toward low complexity. Over residues 661–674 (ENTSVGTQETQSQI) the composition is skewed to polar residues. The segment covering 675 to 688 (TTPVATTPTATDVT) has biased composition (low complexity). The segment covering 689–702 (ENTSVETQETQSQI) has biased composition (polar residues). The span at 703 to 720 (TTPVATTSTATDVTENTS) shows a compositional bias: low complexity. Residues 721–730 (VETQETQSQI) show a composition bias toward polar residues. Low complexity predominate over residues 731–742 (TTPVATTPTATD). Helical transmembrane passes span 809–829 (LFGW…VIEA) and 832–852 (GIPI…VWFV).

The protein belongs to the class-I aminoacyl-tRNA synthetase family. Glutamate--tRNA ligase type 1 subfamily. As to quaternary structure, monomer.

Its subcellular location is the cytoplasm. It localises to the cell membrane. The enzyme catalyses tRNA(Glu) + L-glutamate + ATP = L-glutamyl-tRNA(Glu) + AMP + diphosphate. Its function is as follows. Catalyzes the attachment of glutamate to tRNA(Glu) in a two-step reaction: glutamate is first activated by ATP to form Glu-AMP and then transferred to the acceptor end of tRNA(Glu). This is Glutamate--tRNA ligase (gltX) from Trichodesmium erythraeum (strain IMS101).